We begin with the raw amino-acid sequence, 415 residues long: Ribulose bisphosphate carboxylase large chain (415 aa).

Substrate contacts are provided by N101 and T151. K153 acts as the Proton acceptor in catalysis. A substrate-binding site is contributed by K155. Residues K179, D181, and E182 each coordinate Mg(2+). K179 carries the post-translational modification N6-carboxylysine. H272 acts as the Proton acceptor in catalysis. Residues R273, H305, and S357 each coordinate substrate.

Belongs to the RuBisCO large chain family. Type I subfamily. In terms of assembly, heterohexadecamer of 8 large chains and 8 small chains; disulfide-linked. The disulfide link is formed within the large subunit homodimers. The cofactor is Mg(2+). The disulfide bond which can form in the large chain dimeric partners within the hexadecamer appears to be associated with oxidative stress and protein turnover.

It localises to the plastid. Its subcellular location is the chloroplast. It carries out the reaction 2 (2R)-3-phosphoglycerate + 2 H(+) = D-ribulose 1,5-bisphosphate + CO2 + H2O. The enzyme catalyses D-ribulose 1,5-bisphosphate + O2 = 2-phosphoglycolate + (2R)-3-phosphoglycerate + 2 H(+). RuBisCO catalyzes two reactions: the carboxylation of D-ribulose 1,5-bisphosphate, the primary event in carbon dioxide fixation, as well as the oxidative fragmentation of the pentose substrate in the photorespiration process. Both reactions occur simultaneously and in competition at the same active site. In Cibotium barometz (Scythian lamb), this protein is Ribulose bisphosphate carboxylase large chain.